The primary structure comprises 156 residues: Small ribosomal subunit protein uS7c (156 aa).

The protein belongs to the universal ribosomal protein uS7 family. In terms of assembly, part of the 30S ribosomal subunit.

The protein resides in the plastid. It localises to the chloroplast. In terms of biological role, one of the primary rRNA binding proteins, it binds directly to 16S rRNA where it nucleates assembly of the head domain of the 30S subunit. This chain is Small ribosomal subunit protein uS7c (rps7), found in Chlorella vulgaris (Green alga).